The following is a 333-amino-acid chain: Ribosomal RNA large subunit methyltransferase F (333 aa).

Residues 1–10 (MPQPPKRPRK) are compositionally biased toward basic residues. Residues 1–31 (MPQPPKRPRKPAPAAVKTAPAKGELHPRNRH) are disordered. Low complexity predominate over residues 12-22 (APAAVKTAPAK).

Belongs to the methyltransferase superfamily. METTL16/RlmF family.

It is found in the cytoplasm. The enzyme catalyses adenosine(1618) in 23S rRNA + S-adenosyl-L-methionine = N(6)-methyladenosine(1618) in 23S rRNA + S-adenosyl-L-homocysteine + H(+). Specifically methylates the adenine in position 1618 of 23S rRNA. The polypeptide is Ribosomal RNA large subunit methyltransferase F (Ectopseudomonas mendocina (strain ymp) (Pseudomonas mendocina)).